Reading from the N-terminus, the 462-residue chain is GTPase Der (462 aa).

EngA-type G domains follow at residues 2-164 (QKVI…EEKV) and 198-369 (IRVG…KNYT). GTP-binding positions include 8-15 (GKPNVGKS), 55-59 (DSGGL), 116-119 (NKID), 204-211 (GRVNVGKS), 251-255 (DTAGI), and 315-318 (NKWD). The KH-like domain occupies 370–454 (QKIQTSKLNE…PIVLIPKKRG (85 aa)).

Belongs to the TRAFAC class TrmE-Era-EngA-EngB-Septin-like GTPase superfamily. EngA (Der) GTPase family. In terms of assembly, associates with the 50S ribosomal subunit.

GTPase that plays an essential role in the late steps of ribosome biogenesis. The sequence is that of GTPase Der from Campylobacter concisus (strain 13826).